Here is a 699-residue protein sequence, read N- to C-terminus: Elongation factor G (699 aa).

One can recognise a tr-type G domain in the interval 8–288 (EDYRNFGIMA…AVVDYLPSPL (281 aa)). Residues 17-24 (AHIDAGKT), 86-90 (DTPGH), and 140-143 (NKMD) each bind GTP.

The protein belongs to the TRAFAC class translation factor GTPase superfamily. Classic translation factor GTPase family. EF-G/EF-2 subfamily.

It is found in the cytoplasm. Functionally, catalyzes the GTP-dependent ribosomal translocation step during translation elongation. During this step, the ribosome changes from the pre-translocational (PRE) to the post-translocational (POST) state as the newly formed A-site-bound peptidyl-tRNA and P-site-bound deacylated tRNA move to the P and E sites, respectively. Catalyzes the coordinated movement of the two tRNA molecules, the mRNA and conformational changes in the ribosome. The polypeptide is Elongation factor G (Rhizobium rhizogenes (strain K84 / ATCC BAA-868) (Agrobacterium radiobacter)).